The following is a 154-amino-acid chain: Xanthine-guanine phosphoribosyltransferase (154 aa).

Residues 37–38 (RG), R69, and 88–96 (EDLVDSGDT) contribute to the 5-phospho-alpha-D-ribose 1-diphosphate site. Position 69 (R69) interacts with GMP. A Mg(2+)-binding site is contributed by D89. D92 and I135 together coordinate guanine. Positions 92 and 135 each coordinate xanthine. Residues 92–96 (DSGDT) and 134–135 (WI) contribute to the GMP site.

It belongs to the purine/pyrimidine phosphoribosyltransferase family. XGPT subfamily. Homotetramer. Requires Mg(2+) as cofactor.

It localises to the cell inner membrane. The catalysed reaction is GMP + diphosphate = guanine + 5-phospho-alpha-D-ribose 1-diphosphate. It carries out the reaction XMP + diphosphate = xanthine + 5-phospho-alpha-D-ribose 1-diphosphate. It catalyses the reaction IMP + diphosphate = hypoxanthine + 5-phospho-alpha-D-ribose 1-diphosphate. The protein operates within purine metabolism; GMP biosynthesis via salvage pathway; GMP from guanine: step 1/1. Its pathway is purine metabolism; XMP biosynthesis via salvage pathway; XMP from xanthine: step 1/1. Purine salvage pathway enzyme that catalyzes the transfer of the ribosyl-5-phosphate group from 5-phospho-alpha-D-ribose 1-diphosphate (PRPP) to the N9 position of the 6-oxopurines guanine and xanthine to form the corresponding ribonucleotides GMP (guanosine 5'-monophosphate) and XMP (xanthosine 5'-monophosphate), with the release of PPi. To a lesser extent, also acts on hypoxanthine. The protein is Xanthine-guanine phosphoribosyltransferase of Vibrio parahaemolyticus serotype O3:K6 (strain RIMD 2210633).